Here is a 61-residue protein sequence, read N- to C-terminus: Probable tautomerase LL0574 (61 aa).

Pro-2 serves as the catalytic Proton acceptor; via imino nitrogen.

Belongs to the 4-oxalocrotonate tautomerase family.

The protein is Probable tautomerase LL0574 of Lactococcus lactis subsp. lactis (strain IL1403) (Streptococcus lactis).